Consider the following 1470-residue polypeptide: MGDAADPREVRRTFIVPAIKPFDHYDFSRAKIACNLAWLVAKAFGTETVPEELREPFYTDQYDQEHIKPPVVNLLLSAELYCRAGSLILKSDAAKPLLGHDAVIQALAHKGLYVTDQEKLVTERDLHKKPIQMSAHLAMIDTLMMAYTVEMVSIEKVIACAQQYSAFFQATDLPYDIEDAVMYWINKVNEHLKDIMEQEQKSKEHHTAEAPGGQKSPSKWFWKLVPARYRKEQTLLKQLPCIPLVENLLKDGTDGCALAALIHFYCPAVVRLEDICLKETMSLADSLYNLQLIQEFCQEYLNHCCHFSLEDMLYAASSIKSNYLVFMAELFWWFEVVKPSFVQPRVVRPQGAEPAKDMPSVPVLNAAKRNVLDSSSSSDFTSRYTRPQTHSSVSGGIRRSSSMSYVDGFIGTWPKEKRTSVHGVSFDISFDKEDNAQSSTPNRGIIRSVSNEGLNNSRASKHIRKNLSFKPVNGGEEESIEEELHVDPHGDLKSYMPLSTNELNSNENTHHKLPNGALQNRVLLDEFGNQIETPSIEEALQIIHDTEKPPHTARPDQIANGFFLHGQDLSLLNSNIKLSQSSPDNITDPKGALSPITDTTEVDTGIHVPSEDIPETMDEDSSLRDYTVSLDSDMDDASKFLQDYDIRASNPREALSPCPSTISTKSQPGSSASSSSGVKMTSFAEQKFRKLNHTDGKSSGSSSQKTTPEGSELNIPHMVSWAQIPEESGVAQGRDTTQLLASEMVHLRMRLEEKRRAIEAQKKKMEAAFTKQRQKMGRTAFLTVVKKKGDGISPLREEAAGAEDEKVYTDRAKEKESQKMDGQRSKSLADIKESMENPQGKWLKSPSTPVDPEKQWNLTSPSEETLNEGELLEYTKSIEKLNSSLHFLQQEMQRLSLQQEMLMQMREQQSWVISPPQPSPQKQIRDFKPRQAGLSSAAAPFSADSPRPTHPSPQSSTRKSASFSVKNQRTPRPNELKITPLNRTLTPPRSVDSLPRLRRFSPSQVPIQTRSFVCFGDDGEPQKEPKPKEEIKKEPSECKGTLESCDHNPGEKEVKPLESTVSEVLSQPITETVCVTPNEDQLNQPTDPPPKPVFPPTAPKNVNLIEVSLSDLKPPEKADVSVEKFDGESDKEQFDDDQKVCCGFFFKDDQKAENDMAVKRAALLEKRLRREKETQLRKQQLEAEMEHRKEETRRKTEEERQKKEDERARREFIRQEYMRRKQLKLMEDMDTVIKPRPQVAKQKKQRPKSIHRDHIESPKTPIKGPPVSSLSLASLNTGDTESVHSGKRTPRSESVEGFLSPSRCGSRNGEKDWENASTTSSVASGTEYTGPKLYKEPSAKSNKHIIQNALAHCCLAGKVNEGQKKKILEEMEKSDANNFLILFRDSGCQFRSLYTYCPETEEINKLTGIGPKSITKKMIEGLYKYNSDRKQFSHIPAKTLSASVDAITIHSHLWQTKRPVTPKKLLPTKA.

One can recognise a Calponin-homology (CH) domain in the interval 222–335 (WKLVPARYRK…FMAELFWWFE (114 aa)). The segment at 374 to 397 (SSSSSDFTSRYTRPQTHSSVSGGI) is disordered. A compositionally biased stretch (polar residues) spans 380-390 (FTSRYTRPQTH). Ser402 and Ser404 each carry phosphoserine. The residue at position 412 (Thr412) is a Phosphothreonine. Phosphoserine is present on residues Ser450, Ser581, Ser582, Ser594, and Ser656. Disordered stretches follow at residues 580-622 (QSSP…EDSS) and 648-712 (ASNP…EGSE). A Phosphothreonine modification is found at Thr661. Ser663 bears the Phosphoserine mark. Positions 663 to 682 (STKSQPGSSASSSSGVKMTS) are enriched in low complexity. The span at 686–696 (QKFRKLNHTDG) shows a compositional bias: basic and acidic residues. Positions 739–776 (LLASEMVHLRMRLEEKRRAIEAQKKKMEAAFTKQRQKM) form a coiled coil. Residues 796–835 (REEAAGAEDEKVYTDRAKEKESQKMDGQRSKSLADIKESM) are compositionally biased toward basic and acidic residues. A disordered region spans residues 796-864 (REEAAGAEDE…QWNLTSPSEE (69 aa)). Ser845 is modified (phosphoserine). Positions 870-909 (ELLEYTKSIEKLNSSLHFLQQEMQRLSLQQEMLMQMREQQ) form a coiled coil. Residues 905–1016 (MREQQSWVIS…IQTRSFVCFG (112 aa)) form an MBD region region. Phosphoserine is present on residues Ser914 and Ser919. Disordered regions lie at residues 930–1059 (RQAG…PLES) and 1078–1099 (NEDQ…PTAP). Positions 935–946 (SSAAAPFSADSP) are enriched in low complexity. Over residues 952–971 (SPQSSTRKSASFSVKNQRTP) the composition is skewed to polar residues. A phosphothreonine mark is found at Thr979, Thr984, and Thr986. Phosphoserine is present on residues Ser990 and Ser1001. Positions 1001 to 1011 (SPSQVPIQTRS) are enriched in polar residues. Basic and acidic residues-rich tracts occupy residues 1020-1037 (EPQK…EPSE) and 1044-1056 (SCDH…EVKP). Positions 1086–1098 (TDPPPKPVFPPTA) are enriched in pro residues. Residue Ser1129 is modified to Phosphoserine. The stretch at 1147-1219 (KDDQKAENDM…REFIRQEYMR (73 aa)) forms a coiled coil. Residues 1167 to 1233 (RLRREKETQL…KLMEDMDTVI (67 aa)) show a composition bias toward basic and acidic residues. The disordered stretch occupies residues 1167-1327 (RLRREKETQL…TTSSVASGTE (161 aa)). Over residues 1268-1280 (SSLSLASLNTGDT) the composition is skewed to polar residues. 3 positions are modified to phosphoserine: Ser1294, Ser1300, and Ser1302. The span at 1315 to 1327 (NASTTSSVASGTE) shows a compositional bias: polar residues. Residues 1330-1464 (GPKLYKEPSA…QTKRPVTPKK (135 aa)) enclose the CKK domain.

This sequence belongs to the CAMSAP1 family. In terms of assembly, interacts with CAMSAP3. Interacts with KATNA1 and KATNB1; leading to regulate the length of CAMSAP2-decorated microtubule stretches. Interacts with a complex formed by AKAP9 and PDE4DIP; this interaction, which is PDE4DIP isoform-specific, recruits CAMSAP2 to the Golgi. Interacts with MAPRE1/EB1. As to expression, present in the soma, axon, and dendritic shaft of hippocampal neurons (at protein level).

Its subcellular location is the cytoplasm. It localises to the cytoskeleton. It is found in the golgi apparatus. The protein resides in the cilium basal body. Functionally, key microtubule-organizing protein that specifically binds the minus-end of non-centrosomal microtubules and regulates their dynamics and organization. Specifically recognizes growing microtubule minus-ends and autonomously decorates and stabilizes microtubule lattice formed by microtubule minus-end polymerization. Acts on free microtubule minus-ends that are not capped by microtubule-nucleating proteins or other factors and protects microtubule minus-ends from depolymerization. In addition, it also reduces the velocity of microtubule polymerization. Through the microtubule cytoskeleton, also regulates the organization of cellular organelles including the Golgi and the early endosomes. Essential for the tethering, but not for nucleation of non-centrosomal microtubules at the Golgi: together with Golgi-associated proteins AKAP9 and PDE4DIP, required to tether non-centrosomal minus-end microtubules to the Golgi, an important step for polarized cell movement. Also acts as a regulator of neuronal polarity and development: localizes to non-centrosomal microtubule minus-ends in neurons and stabilizes non-centrosomal microtubules, which is required for neuronal polarity, axon specification and dendritic branch formation. Through the microtubule cytoskeleton, regulates the autophagosome transport. The chain is Calmodulin-regulated spectrin-associated protein 2 from Rattus norvegicus (Rat).